Consider the following 393-residue polypeptide: Major outer membrane porin, serovar D (393 aa).

The first 22 residues, 1–22, serve as a signal peptide directing secretion; the sequence is MKKLLKSVLVFAALSSASSLQA.

It belongs to the chlamydial porin (CP) (TC 1.B.2) family. As to quaternary structure, part of a disulfide cross-linked outer membrane complex (COMC) composed of the major outer membrane porin (MOMP), the small cysteine-rich protein (OmcA) and the large cysteine-rich periplasmic protein (OmcB).

Its subcellular location is the cell outer membrane. In terms of biological role, in elementary bodies (EBs, the infectious stage, which is able to survive outside the host cell) provides the structural integrity of the outer envelope through disulfide cross-links with the small cysteine-rich protein and the large cysteine-rich periplasmic protein. It has been described in publications as the Sarkosyl-insoluble COMC (Chlamydia outer membrane complex), and serves as the functional equivalent of peptidoglycan. Functionally, permits diffusion of specific solutes through the outer membrane. The protein is Major outer membrane porin, serovar D (ompA) of Chlamydia trachomatis serovar D (strain ATCC VR-885 / DSM 19411 / UW-3/Cx).